The primary structure comprises 404 residues: Coenzyme F(430) synthetase (404 aa).

112 to 117 (GVKGKT) contributes to the ATP binding site.

Belongs to the MurCDEF family.

It catalyses the reaction 15,17(3)-seco-F430-17(3)-acid + ATP = coenzyme F430 + ADP + phosphate. Functionally, involved in the biosynthesis of the unique nickel-containing tetrapyrrole coenzyme F430, the prosthetic group of methyl-coenzyme M reductase (MCR), which plays a key role in methanogenesis and anaerobic methane oxidation. Catalyzes the activation the g-propionate side chain of 15,17(3)-seco-F430-17(3)-acid (seco-F430) for intramolecular C-C bond formation to yield the carbocyclic F ring of coenzyme F430. This Methanocaldococcus jannaschii (strain ATCC 43067 / DSM 2661 / JAL-1 / JCM 10045 / NBRC 100440) (Methanococcus jannaschii) protein is Coenzyme F(430) synthetase.